The following is a 77-amino-acid chain: Acyl carrier protein (77 aa).

The Carrier domain occupies 1–76 (MENFDKVKDI…DAVNFINNLE (76 aa)). S36 bears the O-(pantetheine 4'-phosphoryl)serine mark.

The protein belongs to the acyl carrier protein (ACP) family. Post-translationally, 4'-phosphopantetheine is transferred from CoA to a specific serine of apo-ACP by AcpS. This modification is essential for activity because fatty acids are bound in thioester linkage to the sulfhydryl of the prosthetic group.

Its subcellular location is the cytoplasm. It functions in the pathway lipid metabolism; fatty acid biosynthesis. Functionally, carrier of the growing fatty acid chain in fatty acid biosynthesis. The polypeptide is Acyl carrier protein (Staphylococcus carnosus (strain TM300)).